A 251-amino-acid chain; its full sequence is MQTKETRGLVLYNRPFREDDKLVKIFTETSGKHMFFVRHATNSKLSSVIQPLILANFILKINNHGLSYIEDYKGVSLFKEINADIYKLAYATYLVSLADAAISDAVYDAPLFAFLIKTLELMDEGLDYEILTNIFEIQILDRFGVQLNFHDCVFCHRVGLAFDFSHRYSGLLCPEHYEKDLYRSHLDPNVPYLLNQFQTLHFDSLKTISVKPDMKQKLRKFIDEVYEDYIGLRLKSKKFIDDLDHWGQVMK.

Belongs to the RecO family.

Involved in DNA repair and RecF pathway recombination. The polypeptide is DNA repair protein RecO (Streptococcus mutans serotype c (strain ATCC 700610 / UA159)).